Reading from the N-terminus, the 827-residue chain is Protein Jade-1 (827 aa).

The segment at 1–35 (MKRVCLPSSSEDSDDNGSLSTSWSQHSRSLPSFRH) is disordered. Residues 16–30 (NGSLSTSWSQHSRSL) are compositionally biased toward polar residues. The PHD-type 1 zinc finger occupies 200–250 (DVVCDVCQSPDGEDGNEMVFCDKCNICVHQACYGILKVPEGSWLCRTCALG). A C2HC pre-PHD-type zinc finger spans residues 252-286 (QPKCLLCPKKGGAMKPTRSGTKWVHVSCALWIPEV). The segment at 310-366 (LLCSLCNEKVGACIQCSIKNCRTAFHVTCAFDHGLEMKTILTQEDEVKFKSYCPKHG) adopts a PHD-type 2 zinc-finger fold. Disordered regions lie at residues 622–705 (TVAK…SSSL) and 769–810 (RTKE…SSSS). Composition is skewed to basic and acidic residues over residues 646–661 (SRTQ…EKPL) and 669–682 (KHTE…EKKR). Positions 692–705 (ATASSNKKQCSSSL) are enriched in polar residues.

It belongs to the JADE family. As to quaternary structure, component of the HBO1 complex composed.

The protein localises to the nucleus. It is found in the chromosome. It localises to the cytoplasm. The protein resides in the cytoskeleton. Its subcellular location is the cilium basal body. In terms of biological role, scaffold subunit of some HBO1 complexes, which have a histone H4 acetyltransferase activity. Plays a key role in HBO1 complex by directing KAT7/HBO1 specificity towards histone H4 acetylation (H4K5ac, H4K8ac and H4K12ac), regulating DNA replication initiation, regulating DNA replication initiation. The sequence is that of Protein Jade-1 (jade1) from Xenopus laevis (African clawed frog).